The chain runs to 172 residues: Cold-inducible RNA-binding protein (172 aa).

The RRM domain occupies 6-84 (GKLFVGGLSF…RQIRVDQAGK (79 aa)). Residues 70–172 (KSVDGRQIRV…SYDSYATHNE (103 aa)) are disordered. 2 stretches are compositionally biased toward gly residues: residues 93–105 (YRGG…GFFR) and 114–137 (FSRG…GYGG). A phosphoserine mark is found at S130, S138, S146, S156, S159, and S163. Over residues 138 to 172 (SRDYYASRSQGGSYGYRSSGGSYRDSYDSYATHNE) the composition is skewed to low complexity.

As to quaternary structure, interacts with EIF4G1. Associates with ribosomes. In terms of processing, methylated on arginine residues. Methylation of the RGG motifs is a prerequisite for recruitment into SGs. Phosphorylated by CK2, GSK3A and GSK3B. Phosphorylation by GSK3B increases RNA-binding activity to the TXN 3'-UTR transcript upon exposure to UV radiation. Ubiquitous.

The protein resides in the nucleus. Its subcellular location is the nucleoplasm. It localises to the cytoplasm. In terms of biological role, cold-inducible mRNA binding protein that plays a protective role in the genotoxic stress response by stabilizing transcripts of genes involved in cell survival. Promotes assembly of stress granules (SGs), when overexpressed. Seems to play an essential role in cold-induced suppression of cell proliferation. Acts as a translational repressor. Acts as a translational activator. Binds specifically to the 3'-untranslated regions (3'-UTRs) of stress-responsive transcripts RPA2 and TXN. The protein is Cold-inducible RNA-binding protein (Cirbp) of Mus musculus (Mouse).